We begin with the raw amino-acid sequence, 505 residues long: Lysine--tRNA ligase (505 aa).

Residues E415 and E422 each coordinate Mg(2+).

The protein belongs to the class-II aminoacyl-tRNA synthetase family. Homodimer. Mg(2+) is required as a cofactor.

The protein localises to the cytoplasm. The catalysed reaction is tRNA(Lys) + L-lysine + ATP = L-lysyl-tRNA(Lys) + AMP + diphosphate. In Pectobacterium atrosepticum (strain SCRI 1043 / ATCC BAA-672) (Erwinia carotovora subsp. atroseptica), this protein is Lysine--tRNA ligase.